The sequence spans 396 residues: Cytochrome P450 121 (396 aa).

Residue C345 participates in heme binding.

The protein belongs to the cytochrome P450 family. The cofactor is heme.

The protein resides in the cytoplasm. The sequence is that of Cytochrome P450 121 (cyp121) from Mycobacterium bovis (strain ATCC BAA-935 / AF2122/97).